The chain runs to 307 residues: ATP-dependent (S)-NAD(P)H-hydrate dehydratase (307 aa).

The YjeF C-terminal domain occupies 1–291 (MDHFLKLLPK…DEIPKLVRDV (291 aa)). Residues Gly96 and 150 to 156 (NIVEFSR) contribute to the (6S)-NADPHX site. ATP contacts are provided by residues 194 to 198 (KGEVD) and 214 to 223 (SSLRRCGGQG). Asp224 serves as a coordination point for (6S)-NADPHX.

This sequence belongs to the NnrD/CARKD family. Mg(2+) serves as cofactor.

It catalyses the reaction (6S)-NADHX + ATP = ADP + phosphate + NADH + H(+). The catalysed reaction is (6S)-NADPHX + ATP = ADP + phosphate + NADPH + H(+). Catalyzes the dehydration of the S-form of NAD(P)HX at the expense of ATP, which is converted to ADP. Together with NAD(P)HX epimerase, which catalyzes the epimerization of the S- and R-forms, the enzyme allows the repair of both epimers of NAD(P)HX, a damaged form of NAD(P)H that is a result of enzymatic or heat-dependent hydration. The chain is ATP-dependent (S)-NAD(P)H-hydrate dehydratase from Caenorhabditis briggsae.